Here is a 345-residue protein sequence, read N- to C-terminus: Phosphate acyltransferase (345 aa).

The protein belongs to the PlsX family. As to quaternary structure, homodimer. Probably interacts with PlsY.

It is found in the cytoplasm. The catalysed reaction is a fatty acyl-[ACP] + phosphate = an acyl phosphate + holo-[ACP]. The protein operates within lipid metabolism; phospholipid metabolism. Functionally, catalyzes the reversible formation of acyl-phosphate (acyl-PO(4)) from acyl-[acyl-carrier-protein] (acyl-ACP). This enzyme utilizes acyl-ACP as fatty acyl donor, but not acyl-CoA. This is Phosphate acyltransferase from Nitratidesulfovibrio vulgaris (strain ATCC 29579 / DSM 644 / CCUG 34227 / NCIMB 8303 / VKM B-1760 / Hildenborough) (Desulfovibrio vulgaris).